Consider the following 199-residue polypeptide: Chaperone protein TorD (199 aa).

The protein belongs to the TorD/DmsD family. TorD subfamily.

It localises to the cytoplasm. In terms of biological role, involved in the biogenesis of TorA. Acts on TorA before the insertion of the molybdenum cofactor and, as a result, probably favors a conformation of the apoenzyme that is competent for acquiring the cofactor. This is Chaperone protein TorD from Escherichia coli O139:H28 (strain E24377A / ETEC).